The chain runs to 843 residues: Protein P (843 aa).

Residues 1–177 are terminal protein domain (TP); the sequence is MPLSYQHFRK…FCGSPYSWEQ (177 aa). The spacer stretch occupies residues 178 to 346; it reads DLQHGRLVFQ…YCLCHIVNLI (169 aa). Disordered regions lie at residues 220 to 258 and 292 to 319; these read KSRL…VGVE and SKGH…SQGS. Low complexity predominate over residues 308–319; that stretch reads PPNSSRSQSQGS. The tract at residues 347–690 is polymerase/reverse transcriptase domain (RT); that stretch reads DDWGPCAEHG…YLNLYPVARQ (344 aa). Positions 357–600 constitute a Reverse transcriptase domain; that stretch reads EHRIRTPRTP…YSLNFMGYVI (244 aa). Residues D429, D551, and D552 each coordinate Mg(2+).

Belongs to the hepadnaviridae P protein family.

The catalysed reaction is DNA(n) + a 2'-deoxyribonucleoside 5'-triphosphate = DNA(n+1) + diphosphate. The enzyme catalyses Endonucleolytic cleavage to 5'-phosphomonoester.. Activated by host HSP70 and HSP40 in vitro to be able to bind the epsilon loop of the pgRNA. Because deletion of the RNase H region renders the protein partly chaperone-independent, the chaperones may be needed indirectly to relieve occlusion of the RNA-binding site by this domain. Inhibited by several reverse-transcriptase inhibitors: Lamivudine, Adefovir and Entecavir. Functionally, multifunctional enzyme that converts the viral RNA genome into dsDNA in viral cytoplasmic capsids. This enzyme displays a DNA polymerase activity that can copy either DNA or RNA templates, and a ribonuclease H (RNase H) activity that cleaves the RNA strand of RNA-DNA heteroduplexes in a partially processive 3'- to 5'-endonucleasic mode. Neo-synthesized pregenomic RNA (pgRNA) are encapsidated together with the P protein, and reverse-transcribed inside the nucleocapsid. Initiation of reverse-transcription occurs first by binding the epsilon loop on the pgRNA genome, and is initiated by protein priming, thereby the 5'-end of (-)DNA is covalently linked to P protein. Partial (+)DNA is synthesized from the (-)DNA template and generates the relaxed circular DNA (RC-DNA) genome. After budding and infection, the RC-DNA migrates in the nucleus, and is converted into a plasmid-like covalently closed circular DNA (cccDNA). The activity of P protein does not seem to be necessary for cccDNA generation, and is presumably released from (+)DNA by host nuclear DNA repair machinery. The chain is Protein P from Hepatitis B virus genotype B1 (isolate Japan/Yamagata-2/1998) (HBV-B).